An 821-amino-acid polypeptide reads, in one-letter code: Probable E3 ubiquitin-protein ligase hulA (821 aa).

Residues 1 to 112 (MGSNLPAQPN…QMGGDEMLTR (112 aa)) enclose the C2 domain. Disordered stretches follow at residues 140-240 (PNQA…WERR) and 255-359 (RTTT…YFVD). Polar residues-rich tracts occupy residues 151–173 (AQSSTSSGLVPQVSSASHPSVSP), 181–201 (AASNVSLHPQRVPSTTRPTST), 217–228 (QGSRTNLSSFED), and 255–272 (RTTTWTRPSSNYNEQTQR). The 34-residue stretch at 231-264 (GRLPAGWERREDNLGRTYYVDHNTRTTTWTRPSS) folds into the WW 1 domain. Residues 281 to 296 (LERRAHQSRMLPEDRT) show a composition bias toward basic and acidic residues. A compositionally biased stretch (polar residues) spans 297 to 306 (GANSPNLQES). Residues 311-339 (PQQAHTPPAGGSASAVSMMATGATTAGTG) show a composition bias toward low complexity. WW domains are found at residues 339-372 (GELPPGWEQRTTPEGRPYFVDHNTRTTTWVDPRR) and 399-432 (GPLPSGWEMRLTNTARVYFVDHNTKTTTWDDPRL). The region spanning 488–821 (SASDLKKRLM…VEETLGFGQE (334 aa)) is the HECT domain. The active-site Glycyl thioester intermediate is the C789.

It belongs to the RSP5/NEDD4 family. Interacts with creD.

The protein localises to the cytoplasm. It carries out the reaction S-ubiquitinyl-[E2 ubiquitin-conjugating enzyme]-L-cysteine + [acceptor protein]-L-lysine = [E2 ubiquitin-conjugating enzyme]-L-cysteine + N(6)-ubiquitinyl-[acceptor protein]-L-lysine.. Its pathway is protein modification; protein ubiquitination. Its function is as follows. E3 ubiquitin-protein ligase which accepts ubiquitin from an E2 ubiquitin-conjugating enzyme in the form of a thioester and then directly transfers the ubiquitin to targeted substrates. Probably involved in the regulatory network controlling carbon source utilization. This chain is Probable E3 ubiquitin-protein ligase hulA (hulA), found in Aspergillus niger (strain ATCC MYA-4892 / CBS 513.88 / FGSC A1513).